Consider the following 231-residue polypeptide: Ureidoacrylate amidohydrolase RutB (231 aa).

Catalysis depends on D25, which acts as the Proton acceptor. The active site involves K134. C167 acts as the Nucleophile in catalysis.

The protein belongs to the isochorismatase family. RutB subfamily.

It catalyses the reaction (Z)-3-ureidoacrylate + H2O + H(+) = (Z)-3-aminoacrylate + NH4(+) + CO2. The enzyme catalyses (Z)-3-ureidoacrylate + H2O = (Z)-3-aminoacrylate + carbamate + H(+). The catalysed reaction is (Z)-2-methylureidoacrylate + H2O + H(+) = (Z)-2-methylaminoacrylate + NH4(+) + CO2. Its function is as follows. Hydrolyzes ureidoacrylate to form aminoacrylate and carbamate. The carbamate hydrolyzes spontaneously, thereby releasing one of the nitrogen atoms of the pyrimidine ring as ammonia and one of its carbon atoms as CO2. This chain is Ureidoacrylate amidohydrolase RutB, found in Escherichia coli O18:K1:H7 (strain IHE3034 / ExPEC).